Here is an 87-residue protein sequence, read N- to C-terminus: Neutrophil antibiotic peptide NP-3A (87 aa).

Positions 1 to 19 (MRTLTLLTTLLLLALHTQA) are cleaved as a signal peptide. Positions 20–58 (ESPQGSTKEAPDEEQDISVFFGGDKGTALQDAAVKAGVT) are excised as a propeptide. 3 cysteine pairs are disulfide-bonded: C59–C87, C61–C76, and C66–C86.

This sequence belongs to the alpha-defensin family. In terms of tissue distribution, highest expression in bone marrow and to a much lesser extent in small intestine.

Its subcellular location is the secreted. Functionally, active in vitro against S.aureus, fungi, Gram-positive and Gram-negative bacteria and to a lesser extent against an enveloped virus. The polypeptide is Neutrophil antibiotic peptide NP-3A (Rattus norvegicus (Rat)).